The sequence spans 468 residues: Glutamate--tRNA ligase (468 aa).

The short motif at 8-18 is the 'HIGH' region element; the sequence is PSPTGDPHVGT. The 'KMSKS' region signature appears at 243-247; it reads KISKR. Lys246 contributes to the ATP binding site.

Belongs to the class-I aminoacyl-tRNA synthetase family. Glutamate--tRNA ligase type 1 subfamily. In terms of assembly, monomer.

The protein resides in the cytoplasm. The catalysed reaction is tRNA(Glu) + L-glutamate + ATP = L-glutamyl-tRNA(Glu) + AMP + diphosphate. Functionally, catalyzes the attachment of glutamate to tRNA(Glu) in a two-step reaction: glutamate is first activated by ATP to form Glu-AMP and then transferred to the acceptor end of tRNA(Glu). The protein is Glutamate--tRNA ligase of Thermus thermophilus (strain ATCC BAA-163 / DSM 7039 / HB27).